The sequence spans 132 residues: Regulator of ribonuclease activity B (132 aa).

The protein belongs to the RraB family. Interacts with the C-terminal region of Rne.

Its subcellular location is the cytoplasm. Its function is as follows. Globally modulates RNA abundance by binding to RNase E (Rne) and regulating its endonucleolytic activity. Can modulate Rne action in a substrate-dependent manner by altering the composition of the degradosome. This Alteromonas mediterranea (strain DSM 17117 / CIP 110805 / LMG 28347 / Deep ecotype) protein is Regulator of ribonuclease activity B.